Consider the following 826-residue polypeptide: MAIYYKFKSARDYDTISMDGPFITVGLLKEKIYETKHLGSGKDLDIVISNAQTNEEYLDEAMLIPKNTSVLIRRVPGRPRIRIITREEPRVEDKVENVQADMNNVITADASPVEDEFDEFGNDLYSIPDAPAVHSNNLCHDSAPADDEETKLKALIDTPALDWHQQGADSFGPGRGYGRGMAGRMGGRGFGMERTTPPPGYVCHRCNVSGHFIQHCSTNGNPNFDVKRVKPPTGIPKSMLMATPNGSYSLPSGAVAVLKPNEDAFEKEMEGLTSTTRSVGEFPPELKCPLCKEVMRDAALASKCCLKSYCDKCIRDHIIAKSMCVCGATHVLADDLLPNKTLRDTINRILESGNSSAENAGSMCQVQDMESVRCPPPKALSPTTSAASGGEKKPAPSNNNETSTLKPSIEIAEITSAWASAEIVKVEKPVDASANIQGSSNGKEAAVSQLNTQPPKEEMPQQVASGEQGKRKKKKPRMSGTDLAGPDYMMPMGPGPGNQYFNGFQPGFNGVQHGFNGVQPGFNGFHHGFNGFPGPFPGAMPPFVGYGFGGVIHPDPFAAQGFGFPNIPPPYRDLAEMGNRMNLQHPIMGREEFEAKKTEMKRKRENEIRRSEGGNVVRDSEKSRIMNNSAVTSSPVKPKSRQGPPPPISSDYDRRRRSDRSSPERQSSRRFTSPPRSSSRKSERDRHHDLDSEHDRRRDRPRETDRKHRKRSEKSSSDPTVEIDDNNKSNVFTRISFPEESSGKQRKTSKSSPAPPESSVAPVSSGRRHHSRREREMVEYDSSDDEDRHFKRKPSRYKRSPSVAPSDAGDEHFRHSKRSKGERARA.

The region spanning 3 to 76 (IYYKFKSARD…NTSVLIRRVP (74 aa)) is the DWNN domain. A CCHC-type zinc finger spans residues 203–216 (CHRCNVSGHFIQHC). A Phosphoserine modification is found at S278. An RING-type; degenerate zinc finger spans residues 288-326 (CPLCKEVMRDAALASKCCLKSYCDKCIRDHIIAKSMCVC). Composition is skewed to polar residues over residues 356–365 (SAENAGSMCQ), 396–406 (PSNNNETSTLK), and 435–454 (NIQGSSNGKEAAVSQLNTQP). 3 disordered regions span residues 356–406 (SAEN…STLK), 435–488 (NIQG…GPDY), and 585–826 (HPIM…RARA). A Phosphoserine modification is found at S397. The segment covering 588–624 (MGREEFEAKKTEMKRKRENEIRRSEGGNVVRDSEKSR) has biased composition (basic and acidic residues). Residues 625–635 (IMNNSAVTSSP) show a composition bias toward polar residues. Residues 651 to 667 (DYDRRRRSDRSSPERQS) are compositionally biased toward basic and acidic residues. 2 short sequence motifs (nuclear localization signal) span residues 668–675 (SRRFTSPP) and 695–702 (DRRRDRPR). Positions 680–706 (RKSERDRHHDLDSEHDRRRDRPRETDR) are enriched in basic and acidic residues. Residues 790-799 (FKRKPSRYKR) show a composition bias toward basic residues. The residue at position 800 (S800) is a Phosphoserine. Residues 809-826 (GDEHFRHSKRSKGERARA) are compositionally biased toward basic and acidic residues.

As to quaternary structure, interacts with PRMT13/PRMT4B in the nucleus. Expressed constitutively in both shoot and root tissues.

The protein resides in the nucleus. The enzyme catalyses S-ubiquitinyl-[E2 ubiquitin-conjugating enzyme]-L-cysteine + [acceptor protein]-L-lysine = [E2 ubiquitin-conjugating enzyme]-L-cysteine + N(6)-ubiquitinyl-[acceptor protein]-L-lysine.. E3 ubiquitin ligase acting as a negative regulator of oxidative stress tolerance, probably by mediating 26S proteasome-mediated degradation of PRMT13/PRMT4B, thus preventing APX1 and GPX1 accumulation via the reduction of histone H3 methylation (H3R17me2a). Confers sensitivity to cadmium CdCl(2) and salt NaCl stresses. This is E3 ubiquitin ligase PARAQUAT TOLERANCE 3 from Arabidopsis thaliana (Mouse-ear cress).